The sequence spans 274 residues: Probable lipoprotein peptidase YaeF (274 aa).

Residues 1 to 20 (MDKPKAYCRLFLPSFLLLSA) form the signal peptide. A lipid anchor (N-palmitoyl cysteine) is attached at cysteine 21. The S-diacylglycerol cysteine moiety is linked to residue cysteine 21. Cysteine 207 (nucleophile) is an active-site residue. Histidine 257 serves as the catalytic Proton acceptor.

Its subcellular location is the cell inner membrane. This is Probable lipoprotein peptidase YaeF (yaeF) from Escherichia coli (strain K12).